The primary structure comprises 425 residues: L-cysteine:1D-myo-inositol 2-amino-2-deoxy-alpha-D-glucopyranoside ligase (425 aa).

Cys-43 is a Zn(2+) binding site. L-cysteinyl-5'-AMP contacts are provided by residues 43 to 46 (CGIT), Ser-58, and 81 to 83 (NVT). The 'HIGH' region motif lies at 45–55 (ITPYDATHMGH). Residues 199–204 (ERGGDP) carry the 'ERGGDP' region motif. Trp-240 contacts L-cysteinyl-5'-AMP. Cys-244 provides a ligand contact to Zn(2+). 262–264 (GSD) is a binding site for L-cysteinyl-5'-AMP. His-269 lines the Zn(2+) pocket. Val-295 lines the L-cysteinyl-5'-AMP pocket. The short motif at 301–305 (KMSKS) is the 'KMSKS' region element.

This sequence belongs to the class-I aminoacyl-tRNA synthetase family. MshC subfamily. In terms of assembly, monomer. Zn(2+) serves as cofactor.

The enzyme catalyses 1D-myo-inositol 2-amino-2-deoxy-alpha-D-glucopyranoside + L-cysteine + ATP = 1D-myo-inositol 2-(L-cysteinylamino)-2-deoxy-alpha-D-glucopyranoside + AMP + diphosphate + H(+). In terms of biological role, catalyzes the ATP-dependent condensation of GlcN-Ins and L-cysteine to form L-Cys-GlcN-Ins. The chain is L-cysteine:1D-myo-inositol 2-amino-2-deoxy-alpha-D-glucopyranoside ligase from Paenarthrobacter aurescens (strain TC1).